Here is a 155-residue protein sequence, read N- to C-terminus: Cathelicidin-1 (155 aa).

Residues 1–29 form the signal peptide; the sequence is METQRASLSLGRCSLWLLLLGLALPSASA. Glutamine 30 is subject to Pyrrolidone carboxylic acid. A propeptide spanning residues 30-143 is cleaved from the precursor; that stretch reads QVLSYREAVL…KQPWAPPQAA (114 aa). Cystine bridges form between cysteine 85–cysteine 96, cysteine 107–cysteine 124, and cysteine 146–cysteine 154.

This sequence belongs to the cathelicidin family.

It localises to the secreted. Functionally, potent microbicidal activity; active against S.aureus and E.coli. In Ovis aries (Sheep), this protein is Cathelicidin-1 (CATHL1A).